The following is an 878-amino-acid chain: MNQQYSAMRSNVSMLGKLLGDTIKEALGEEILDKVESIRKLSKSSRAGNEVQRQKLLLTLQNLSNDELLPVARAFNQFLNLTNVAEQYHSISPHGEAASNPVALAKLIERLKDKNFTNQQLKQAVEQISIELVLTAHPTEIARRTLIHKLVEVNTCLSQLDHDDLADYERTNIMRRLRQLVAQSWHTDEIRKIRPTPIDEAKWGFAVVENSLWEGVPAFLREFNEQLEESIDYNLPVEASPIRFTSWMGGDRDGNPNVTAEITRHALLLSRWKAADLFLNDIQVLVSELSMTESTPELRELAGGADVAEPYREIAKQLRTRLQVTRDYLEQRIKGQQSLPPEGLLIDNSALWEPLYACYQSLHQCGMRIIANGQLLDTLRRIRCFGLQLVRLDIRQESTNHTEALSELTQYLELGDYASWSEEQKQTFLLTELNSKRPLIPTHWQPSEATKEVFETCRVIAESPKDSIASYVISMAKVPSDVLAVKLLLKEAGADIRLPVAPLFETLEDLNNAESVMTRLFDIPWYRDLIDNKQMVMIGYSDSAKDAGVMAASWAQYRAQDALIKLCEKSGVTLTLFHGRGGTIGRGGAPAHAALLSQPPGSLKGGLRVTEQGEMIRFKFGLPQVTISSLAHYAGAILEANLLPPPEPKTAWIEVMDALSDVSCEMYRGYVRGEKDFVPYFRAATPEGELGKLPLGSRPAKRRPTGGVETLRAIPWIFAWTQNRLMLPAWLGAGAALQHEIDNGKQAVLDDMCENWPFFNTRIAMLEMVYAKADLWLAEYYDQRLVEENLWPLGAKLRQQLSDDIKSVLAISKDEHLMADLPWVAESIALRNVYTDPLNVLQAELLQRSRTHSESDPRIEQALMVTIAGIAAGMRNTG.

Active-site residues include His-137 and Lys-545.

It belongs to the PEPCase type 1 family. It depends on Mg(2+) as a cofactor.

The enzyme catalyses oxaloacetate + phosphate = phosphoenolpyruvate + hydrogencarbonate. Functionally, forms oxaloacetate, a four-carbon dicarboxylic acid source for the tricarboxylic acid cycle. This chain is Phosphoenolpyruvate carboxylase, found in Proteus mirabilis (strain HI4320).